Reading from the N-terminus, the 492-residue chain is Lysine--tRNA ligase (492 aa).

The Mg(2+) site is built by D395 and E402.

Belongs to the class-II aminoacyl-tRNA synthetase family. Homodimer. Mg(2+) serves as cofactor.

The protein resides in the cytoplasm. It carries out the reaction tRNA(Lys) + L-lysine + ATP = L-lysyl-tRNA(Lys) + AMP + diphosphate. The protein is Lysine--tRNA ligase of Thermus thermophilus (strain ATCC BAA-163 / DSM 7039 / HB27).